Consider the following 637-residue polypeptide: tRNA uridine 5-carboxymethylaminomethyl modification enzyme MnmG (637 aa).

Residues 15–20 (GAGHAG), isoleucine 127, and serine 182 each bind FAD. 276–290 (GPRYCPSIEDKIVRF) provides a ligand contact to NAD(+). An FAD-binding site is contributed by glutamine 373.

The protein belongs to the MnmG family. In terms of assembly, homodimer. Heterotetramer of two MnmE and two MnmG subunits. Requires FAD as cofactor.

It is found in the cytoplasm. NAD-binding protein involved in the addition of a carboxymethylaminomethyl (cmnm) group at the wobble position (U34) of certain tRNAs, forming tRNA-cmnm(5)s(2)U34. The sequence is that of tRNA uridine 5-carboxymethylaminomethyl modification enzyme MnmG from Streptococcus pneumoniae serotype 4 (strain ATCC BAA-334 / TIGR4).